Here is a 155-residue protein sequence, read N- to C-terminus: 6,7-dimethyl-8-ribityllumazine synthase (155 aa).

5-amino-6-(D-ribitylamino)uracil is bound by residues Phe24, 58–60, and 82–84; these read AFE and VII. 87–88 provides a ligand contact to (2S)-2-hydroxy-3-oxobutyl phosphate; it reads ST. The active-site Proton donor is the His90. Phe115 serves as a coordination point for 5-amino-6-(D-ribitylamino)uracil. A (2S)-2-hydroxy-3-oxobutyl phosphate-binding site is contributed by Arg129.

The protein belongs to the DMRL synthase family.

It catalyses the reaction (2S)-2-hydroxy-3-oxobutyl phosphate + 5-amino-6-(D-ribitylamino)uracil = 6,7-dimethyl-8-(1-D-ribityl)lumazine + phosphate + 2 H2O + H(+). It participates in cofactor biosynthesis; riboflavin biosynthesis; riboflavin from 2-hydroxy-3-oxobutyl phosphate and 5-amino-6-(D-ribitylamino)uracil: step 1/2. Functionally, catalyzes the formation of 6,7-dimethyl-8-ribityllumazine by condensation of 5-amino-6-(D-ribitylamino)uracil with 3,4-dihydroxy-2-butanone 4-phosphate. This is the penultimate step in the biosynthesis of riboflavin. This Chlorobium chlorochromatii (strain CaD3) protein is 6,7-dimethyl-8-ribityllumazine synthase.